We begin with the raw amino-acid sequence, 316 residues long: Ornithine carbamoyltransferase (316 aa).

Carbamoyl phosphate contacts are provided by residues 59–62 (STRT), Gln-86, Arg-110, and 137–140 (HPCQ). L-ornithine is bound by residues Asn-168, Asp-232, and 236–237 (SM). Residues 273–274 (CL) and Arg-301 each bind carbamoyl phosphate.

This sequence belongs to the aspartate/ornithine carbamoyltransferase superfamily. OTCase family.

It localises to the cytoplasm. The enzyme catalyses carbamoyl phosphate + L-ornithine = L-citrulline + phosphate + H(+). Its pathway is amino-acid biosynthesis; L-arginine biosynthesis; L-arginine from L-ornithine and carbamoyl phosphate: step 1/3. Functionally, reversibly catalyzes the transfer of the carbamoyl group from carbamoyl phosphate (CP) to the N(epsilon) atom of ornithine (ORN) to produce L-citrulline. The polypeptide is Ornithine carbamoyltransferase (argF) (Listeria monocytogenes serovar 1/2a (strain ATCC BAA-679 / EGD-e)).